The following is a 428-amino-acid chain: Dihydroorotase (428 aa).

Zn(2+) is bound by residues H59 and H61. Substrate is bound by residues 61 to 63 (HFR) and N93. D151, H178, and H231 together coordinate Zn(2+). Position 277 (N277) interacts with substrate. D304 lines the Zn(2+) pocket. The active site involves D304. Substrate is bound by residues H308 and 322 to 323 (FG).

The protein belongs to the metallo-dependent hydrolases superfamily. DHOase family. Class I DHOase subfamily. Homodimer. Requires Zn(2+) as cofactor.

It carries out the reaction (S)-dihydroorotate + H2O = N-carbamoyl-L-aspartate + H(+). It participates in pyrimidine metabolism; UMP biosynthesis via de novo pathway; (S)-dihydroorotate from bicarbonate: step 3/3. Functionally, catalyzes the reversible cyclization of carbamoyl aspartate to dihydroorotate. This chain is Dihydroorotase, found in Bacillus subtilis (strain 168).